A 324-amino-acid polypeptide reads, in one-letter code: D-alanine--D-alanine ligase (324 aa).

The ATP-grasp domain occupies 112 to 312 (KAVLAAAGVT…FDQLVLWIVE (201 aa)). Residue 139 to 193 (LQPPYVVKPNAEGSSVGVFIIKEGANRPPEEVGAPSWTFGEEVMVEPYIQGMELA) coordinates ATP. Residues aspartate 265, glutamate 279, and asparagine 281 each contribute to the Mg(2+) site.

It belongs to the D-alanine--D-alanine ligase family. Mg(2+) serves as cofactor. It depends on Mn(2+) as a cofactor.

It is found in the cytoplasm. It catalyses the reaction 2 D-alanine + ATP = D-alanyl-D-alanine + ADP + phosphate + H(+). The protein operates within cell wall biogenesis; peptidoglycan biosynthesis. In terms of biological role, cell wall formation. The protein is D-alanine--D-alanine ligase of Caulobacter vibrioides (strain ATCC 19089 / CIP 103742 / CB 15) (Caulobacter crescentus).